A 557-amino-acid polypeptide reads, in one-letter code: Dihydroxy-acid dehydratase (557 aa).

Asp78 lines the Mg(2+) pocket. Cys119 lines the [2Fe-2S] cluster pocket. The Mg(2+) site is built by Asp120 and Lys121. N6-carboxylysine is present on Lys121. Cys192 provides a ligand contact to [2Fe-2S] cluster. Glu442 provides a ligand contact to Mg(2+). Ser468 acts as the Proton acceptor in catalysis.

The protein belongs to the IlvD/Edd family. Homodimer. [2Fe-2S] cluster serves as cofactor. The cofactor is Mg(2+).

The enzyme catalyses (2R)-2,3-dihydroxy-3-methylbutanoate = 3-methyl-2-oxobutanoate + H2O. It catalyses the reaction (2R,3R)-2,3-dihydroxy-3-methylpentanoate = (S)-3-methyl-2-oxopentanoate + H2O. It participates in amino-acid biosynthesis; L-isoleucine biosynthesis; L-isoleucine from 2-oxobutanoate: step 3/4. The protein operates within amino-acid biosynthesis; L-valine biosynthesis; L-valine from pyruvate: step 3/4. In terms of biological role, functions in the biosynthesis of branched-chain amino acids. Catalyzes the dehydration of (2R,3R)-2,3-dihydroxy-3-methylpentanoate (2,3-dihydroxy-3-methylvalerate) into 2-oxo-3-methylpentanoate (2-oxo-3-methylvalerate) and of (2R)-2,3-dihydroxy-3-methylbutanoate (2,3-dihydroxyisovalerate) into 2-oxo-3-methylbutanoate (2-oxoisovalerate), the penultimate precursor to L-isoleucine and L-valine, respectively. This chain is Dihydroxy-acid dehydratase, found in Bacillus cereus (strain AH820).